A 473-amino-acid chain; its full sequence is L-seryl-tRNA(Sec) selenium transferase (473 aa).

Lysine 302 carries the post-translational modification N6-(pyridoxal phosphate)lysine.

Belongs to the SelA family. It depends on pyridoxal 5'-phosphate as a cofactor.

The protein resides in the cytoplasm. The catalysed reaction is L-seryl-tRNA(Sec) + selenophosphate + H(+) = L-selenocysteinyl-tRNA(Sec) + phosphate. The protein operates within aminoacyl-tRNA biosynthesis; selenocysteinyl-tRNA(Sec) biosynthesis; selenocysteinyl-tRNA(Sec) from L-seryl-tRNA(Sec) (bacterial route): step 1/1. In terms of biological role, converts seryl-tRNA(Sec) to selenocysteinyl-tRNA(Sec) required for selenoprotein biosynthesis. The protein is L-seryl-tRNA(Sec) selenium transferase of Shewanella oneidensis (strain ATCC 700550 / JCM 31522 / CIP 106686 / LMG 19005 / NCIMB 14063 / MR-1).